Reading from the N-terminus, the 638-residue chain is Neuroendocrine convertase 2 (638 aa).

A signal peptide spans 1 to 25 (MKGGCVSQWKAAAGFLFCVMVFASA). The propeptide occupies 26 to 109 (ERPVFTNHFL…QQEGFDRKKR (84 aa)). In terms of domain architecture, Peptidase S8 spans 129–453 (QWYLINTGQA…YGVLDAGAMV (325 aa)). Active-site charge relay system residues include D167 and H208. Cystine bridges form between C225–C376 and C317–C347. An N-linked (GlcNAc...) asparagine glycan is attached at N375. S384 acts as the Charge relay system in catalysis. The P/Homo B domain maps to 461-597 (TVPERFHCVG…TLMLHGTQSA (137 aa)). The cysteines at positions 468 and 494 are disulfide-linked. N-linked (GlcNAc...) asparagine glycans are attached at residues N514 and N524.

It belongs to the peptidase S8 family. Furin subfamily.

It is found in the cytoplasmic vesicle. The protein resides in the secretory vesicle. The protein localises to the secreted. It catalyses the reaction Release of protein hormones and neuropeptides from their precursors, generally by hydrolysis of -Lys-Arg-|- bonds.. Functionally, serine endopeptidase which is involved in the processing of hormone and other protein precursors at sites comprised of pairs of basic amino acid residues. Responsible for the release of glucagon from proglucagon in pancreatic A cells. The protein is Neuroendocrine convertase 2 (PCSK2) of Homo sapiens (Human).